Here is a 211-residue protein sequence, read N- to C-terminus: Large ribosomal subunit protein uL4 (211 aa).

Positions 44–90 (ERQGTHSTLTKGEVRGGGKKPWRQKHTGKARTGSTRNPHWTGGGVVF) are disordered. Residues 60-72 (GGKKPWRQKHTGK) are compositionally biased toward basic residues.

It belongs to the universal ribosomal protein uL4 family. As to quaternary structure, part of the 50S ribosomal subunit.

In terms of biological role, one of the primary rRNA binding proteins, this protein initially binds near the 5'-end of the 23S rRNA. It is important during the early stages of 50S assembly. It makes multiple contacts with different domains of the 23S rRNA in the assembled 50S subunit and ribosome. Functionally, forms part of the polypeptide exit tunnel. This is Large ribosomal subunit protein uL4 from Ureaplasma urealyticum serovar 10 (strain ATCC 33699 / Western).